A 337-amino-acid polypeptide reads, in one-letter code: Annexin E1 (337 aa).

Annexin repeat units follow at residues 10-80 (TGVT…MLYK), 81-154 (PRAQ…AVAT), 161-238 (DTHE…LAHD), and 242-312 (DPCC…LLWE).

This sequence belongs to the annexin family.

It is found in the cell projection. It localises to the cilium. The protein localises to the flagellum. Functionally, may function as a calcium-regulated structural element linking phospholipid bilayer and underlying axoneme. This chain is Annexin E1 (ANXE1), found in Giardia intestinalis (Giardia lamblia).